Here is a 253-residue protein sequence, read N- to C-terminus: Putative glutamine amidotransferase PB2B2.05 (253 aa).

A Glutamine amidotransferase type-1 domain is found at 5–228 (IIALSVGFSN…INRSKWHMKQ (224 aa)). Catalysis depends on cysteine 100, which acts as the Nucleophile. Catalysis depends on residues histidine 200 and glutamate 202.

The protein resides in the cytoplasm. The protein localises to the nucleus. This chain is Putative glutamine amidotransferase PB2B2.05, found in Schizosaccharomyces pombe (strain 972 / ATCC 24843) (Fission yeast).